Here is a 276-residue protein sequence, read N- to C-terminus: Cell division protein FtsQ (276 aa).

The Cytoplasmic segment spans residues M1–G27. The helical transmembrane segment at I28–W48 threads the bilayer. The Periplasmic segment spans residues M49 to Q276. Residues L55 to Y126 enclose the POTRA domain. A disordered region spans residues G255–Q276. Positions Q266–Q276 are enriched in low complexity.

Belongs to the FtsQ/DivIB family. FtsQ subfamily. Part of a complex composed of FtsB, FtsL and FtsQ. The complex can be formed before its localization to the division site. This tripartite complex can be divided further into a subcomplex of FtsB and FtsL, which forms in the absence of FtsQ. Interacts with FtsA, FtsK, FtsL, FtsB, FtsW, FtsI, FtsN, FtsX and YmgF.

It localises to the cell inner membrane. Essential cell division protein. May link together the upstream cell division proteins, which are predominantly cytoplasmic, with the downstream cell division proteins, which are predominantly periplasmic. May control correct divisome assembly. This is Cell division protein FtsQ from Escherichia coli (strain K12).